A 376-amino-acid polypeptide reads, in one-letter code: MPVEFKLGNSGYTLGVEEELCIVDASTGELVPKIEEIMSRLPEDLAEAVSYELFQSVLEIKTPVCRTVGEAERVLRELRGRVGSWTAACGASLASAGTHPFSRYRDQKVTEHERYRQVIEELRWVATREVIFGQHVHVAVPGPEEAIQAHNRLAEQAPLLLALSANSPYWQGMDTGFESSRVQIFETFPRAGMPPAFPEYAAFEAYVDLMVECGAMDDYTFCWWDVRPHPKLGTIELRVLDSQTHLRHAVALTALTQCIVASSLEDEDAPKGPYHRDIALENKWRASRRGLDAAFFDVDERRNVPARDLARAAVERLRPHAQQLGCEEELLGVLEIVEGGSGSRRQREIYEKSGDFLDVVAFLIEGTRPALAGEPS.

The protein belongs to the glutamate--cysteine ligase type 2 family. YbdK subfamily.

The catalysed reaction is L-cysteine + L-glutamate + ATP = gamma-L-glutamyl-L-cysteine + ADP + phosphate + H(+). Functionally, ATP-dependent carboxylate-amine ligase which exhibits weak glutamate--cysteine ligase activity. This chain is Putative glutamate--cysteine ligase 2-1, found in Rubrobacter xylanophilus (strain DSM 9941 / JCM 11954 / NBRC 16129 / PRD-1).